A 628-amino-acid chain; its full sequence is ATP-dependent zinc metalloprotease FtsH (628 aa).

Over 1 to 7 the chain is Stromal; it reads MKLSWKT. The helical transmembrane segment at 8-28 threads the bilayer; it reads LLLWSLPIFVIGFFFWQGFLG. At 29–118 the chain is on the lumenal side; that stretch reads PTTTDVGSNI…AHPPKSTSAV (90 aa). Residues 119 to 139 form a helical membrane-spanning segment; the sequence is WGLLGNLLFPLLLVGGLAFLF. Over 140–628 the chain is Stromal; it reads RRSNNASGGP…PEKNYYISQF (489 aa). 213–220 is an ATP binding site; it reads GPPGTGKT. H434 provides a ligand contact to Zn(2+). E435 is a catalytic residue. 2 residues coordinate Zn(2+): H438 and D512.

This sequence in the central section; belongs to the AAA ATPase family. It in the C-terminal section; belongs to the peptidase M41 family. Homohexamer. Zn(2+) serves as cofactor.

The protein localises to the plastid. The protein resides in the chloroplast thylakoid membrane. Its function is as follows. Acts as a processive, ATP-dependent zinc metallopeptidase. This chain is ATP-dependent zinc metalloprotease FtsH, found in Pyropia yezoensis (Susabi-nori).